We begin with the raw amino-acid sequence, 434 residues long: Probable carboxypeptidase BDCG_03757 (434 aa).

An N-terminal signal peptide occupies residues methionine 1–alanine 20. N-linked (GlcNAc...) asparagine glycans are attached at residues asparagine 136 and asparagine 150. Aspartate 160 lines the Zn(2+) pocket. The Proton acceptor role is filled by glutamate 192. Glutamate 193 lines the Zn(2+) pocket. The N-linked (GlcNAc...) asparagine glycan is linked to asparagine 343.

Belongs to the peptidase M20A family. Zn(2+) serves as cofactor.

Its subcellular location is the secreted. The chain is Probable carboxypeptidase BDCG_03757 from Ajellomyces dermatitidis (strain ER-3 / ATCC MYA-2586) (Blastomyces dermatitidis).